Reading from the N-terminus, the 339-residue chain is Glycerol-3-phosphate dehydrogenase [NAD(P)+] (339 aa).

Positions 15, 16, 36, and 110 each coordinate NADPH. Residues K110, G144, and S146 each coordinate sn-glycerol 3-phosphate. A148 is a binding site for NADPH. K199, D252, S262, R263, and N264 together coordinate sn-glycerol 3-phosphate. K199 serves as the catalytic Proton acceptor. R263 is a binding site for NADPH. Positions 287 and 289 each coordinate NADPH.

This sequence belongs to the NAD-dependent glycerol-3-phosphate dehydrogenase family.

Its subcellular location is the cytoplasm. It catalyses the reaction sn-glycerol 3-phosphate + NAD(+) = dihydroxyacetone phosphate + NADH + H(+). It carries out the reaction sn-glycerol 3-phosphate + NADP(+) = dihydroxyacetone phosphate + NADPH + H(+). The protein operates within membrane lipid metabolism; glycerophospholipid metabolism. Catalyzes the reduction of the glycolytic intermediate dihydroxyacetone phosphate (DHAP) to sn-glycerol 3-phosphate (G3P), the key precursor for phospholipid synthesis. The polypeptide is Glycerol-3-phosphate dehydrogenase [NAD(P)+] (Desulfotalea psychrophila (strain LSv54 / DSM 12343)).